A 235-amino-acid polypeptide reads, in one-letter code: Small ribosomal subunit protein uS3 (235 aa).

The region spanning 39-107 (VRQFLNKELA…PAQINIAEVK (69 aa)) is the KH type-2 domain. Low complexity predominate over residues 215 to 226 (AQQPEQQPATPK). The interval 215–235 (AQQPEQQPATPKKAPRGKGRK) is disordered.

This sequence belongs to the universal ribosomal protein uS3 family. In terms of assembly, part of the 30S ribosomal subunit. Forms a tight complex with proteins S10 and S14.

Binds the lower part of the 30S subunit head. Binds mRNA in the 70S ribosome, positioning it for translation. The polypeptide is Small ribosomal subunit protein uS3 (Histophilus somni (strain 129Pt) (Haemophilus somnus)).